We begin with the raw amino-acid sequence, 465 residues long: Fujikurins efflux protein FFUJ_12242 (465 aa).

Positions 1-66 (MATNVGGAVD…AAKAHDEGPP (66 aa)) are disordered. A compositionally biased stretch (basic and acidic residues) spans 11–28 (NSRRSISDNRHDPEKPAE). 7 helical membrane passes run 70-90 (TAAWMVVLGAWCCSFCSPGWI), 115-135 (WIPSLEIFFLFGLGPIVGIIF), 142-162 (PLIIGGTIFHVFGLMMASLAK), 175-195 (SAIGVACLYSPALACISTWFL), 200-220 (AAMGIMATGSSVGGVIFPIMI), 231-251 (WALRTAAFLILGLQVIACLTV), and 274-294 (PAFALLLAGIFILTYGMYIPI). Asn310 carries an N-linked (GlcNAc...) asparagine glycan. A run of 5 helical transmembrane segments spans residues 314–334 (YLVAIMNAASLFGRLGAGYGA), 342–362 (MFIIACGVTGISNLAVWIPAT), 368–388 (IGYAIMFGFASGAFVSLVGAL), 404–424 (IVFLVISIPALTMAPIGGAIL), and 430–450 (GWVSLKVFAGVMCLVGSAIIL).

The protein belongs to the major facilitator superfamily. Monocarboxylate porter (TC 2.A.1.13) family.

The protein localises to the cell membrane. Functionally, efflux pump that may be involved in the secretion of fujikurins. The chain is Fujikurins efflux protein FFUJ_12242 from Gibberella fujikuroi (strain CBS 195.34 / IMI 58289 / NRRL A-6831) (Bakanae and foot rot disease fungus).